We begin with the raw amino-acid sequence, 308 residues long: Adipolin (308 aa).

Positions 1–21 are cleaved as a signal peptide; that stretch reads MWAWGWAAAALLWLQTAGAGA. The interval 36 to 119 is disordered; that stretch reads DSPNITTSNR…PPGSPGVGVT (84 aa). N-linked (GlcNAc...) asparagine glycosylation occurs at Asn-39. A compositionally biased stretch (basic residues) spans 82–93; sequence RKRCRGRDKKSR. A compositionally biased stretch (pro residues) spans 99–113; it reads PGPPGPPGPPGPPGS. The C1q domain maps to 153-308; it reads QRLVVEAFYC…SSFSGMLLGT (156 aa).

The protein belongs to the adipolin/erythroferrone family. In terms of assembly, homomultimer; disulfide-linked. Adipolin fC1QTNF12: homotrimer; disulfide-linked. Adipolin gC1QTNF12: homodimer; disulfide-linked. May interact with ERFE. Post-translationally, processed into Adipolin fC1QTNF12 and Adipolin gC1QTNF12 by FURIN. Insulin enhances endogenous C1QTNF12 cleavage. In terms of tissue distribution, widely expressed, with high expression in subcutaneous and epididymal white adipose tissues and brown adipose tissue. Expressed in adipocytes (at protein level).

The protein localises to the secreted. In terms of biological role, insulin-sensitizing adipocyte-secreted protein (adipokine) that regulates glucose metabolism in liver and adipose tissue. Promotes glucose uptake in adipocytes and suppresses de novo glucose production in hepatocytes via the PI3K-Akt signaling pathway. Administration lead to reduction of blood glucose. Able to attenuate inflammation in fat tissue. Its function is as follows. Acts by activating the Akt signaling in hepatocytes and adipocytes. Not able to increase insulin-stimulated glucose uptake in adipocytes. Acts by activating the MAP kinase. Increases insulin-stimulated glucose uptake in adipocytes. The polypeptide is Adipolin (C1qtnf12) (Mus musculus (Mouse)).